Here is a 226-residue protein sequence, read N- to C-terminus: uncharacterized protein (226 aa).

Positions 1–18 (MRRIGLCISLLVTVLVMS) are cleaved as a signal peptide.

This is an uncharacterized protein from Bacillus subtilis (strain 168).